A 392-amino-acid chain; its full sequence is NADH-quinone oxidoreductase subunit D 1 (392 aa).

It belongs to the complex I 49 kDa subunit family. In terms of assembly, NDH-1 is composed of 14 different subunits. Subunits NuoB, C, D, E, F, and G constitute the peripheral sector of the complex.

The protein resides in the cell inner membrane. The catalysed reaction is a quinone + NADH + 5 H(+)(in) = a quinol + NAD(+) + 4 H(+)(out). In terms of biological role, NDH-1 shuttles electrons from NADH, via FMN and iron-sulfur (Fe-S) centers, to quinones in the respiratory chain. The immediate electron acceptor for the enzyme in this species is believed to be a menaquinone. Couples the redox reaction to proton translocation (for every two electrons transferred, four hydrogen ions are translocated across the cytoplasmic membrane), and thus conserves the redox energy in a proton gradient. This chain is NADH-quinone oxidoreductase subunit D 1, found in Cytophaga hutchinsonii (strain ATCC 33406 / DSM 1761 / CIP 103989 / NBRC 15051 / NCIMB 9469 / D465).